Reading from the N-terminus, the 1371-residue chain is uncharacterized protein (1371 aa).

The interval 1020–1048 is disordered; that stretch reads WYLSSSKNTPEPRPDPEPTPEGHDNNLRP. Positions 1029 to 1046 are enriched in basic and acidic residues; the sequence is PEPRPDPEPTPEGHDNNL. The region spanning 1083 to 1371 is the Autotransporter domain; the sequence is GEPKATSMWM…SAMLGVKYTF (289 aa).

It is found in the cell outer membrane. This is an uncharacterized protein from Escherichia coli (strain K12).